The sequence spans 321 residues: Glucokinase (321 aa).

Residue Gly-8 to Thr-13 participates in ATP binding.

Belongs to the bacterial glucokinase family.

It localises to the cytoplasm. The enzyme catalyses D-glucose + ATP = D-glucose 6-phosphate + ADP + H(+). This Escherichia coli O127:H6 (strain E2348/69 / EPEC) protein is Glucokinase.